Reading from the N-terminus, the 160-residue chain is Probable chemoreceptor glutamine deamidase CheD (160 aa).

Belongs to the CheD family.

The enzyme catalyses L-glutaminyl-[protein] + H2O = L-glutamyl-[protein] + NH4(+). Functionally, probably deamidates glutamine residues to glutamate on methyl-accepting chemotaxis receptors (MCPs), playing an important role in chemotaxis. The chain is Probable chemoreceptor glutamine deamidase CheD from Desulfitobacterium hafniense (strain DSM 10664 / DCB-2).